Here is an 831-residue protein sequence, read N- to C-terminus: Zinc transporter ZIP10 (831 aa).

An N-terminal signal peptide occupies residues 1–25 (MKVHMHTKFCLICLLTFIFHHCNHC). The tract at residues 126–318 (HNHQHSHNHL…RKREAPHVKN (193 aa)) is disordered. Over residues 138-147 (ENQTVTSVST) the composition is skewed to polar residues. An N-linked (GlcNAc...) asparagine glycan is attached at asparagine 139. Residues 152–171 (KCDPEKETVEVSVKSDDKHM) show a composition bias toward basic and acidic residues. The span at 172 to 188 (HDHNHRLRHHHRLHHHL) shows a compositional bias: basic residues. Positions 189–198 (DHNNTHHFHN) are enriched in basic and acidic residues. Residues asparagine 198 and asparagine 218 are each glycosylated (N-linked (GlcNAc...) asparagine). The segment covering 211–221 (NEPSTETNKTQ) has biased composition (polar residues). A compositionally biased stretch (basic residues) spans 229-238 (PKGKRKKKGR). Composition is skewed to basic and acidic residues over residues 256 to 273 (DQGE…DRVH) and 281 to 315 (HLPE…EAPH). A glycan (N-linked (GlcNAc...) asparagine) is linked at asparagine 339. A run of 2 helical transmembrane segments spans residues 411-431 (IISI…VPII) and 438-458 (FLLT…ALLH). Positions 464–484 (QGGHDHSHQHAHGHGHSHGHE) are disordered. The chain crosses the membrane as a helical span at residues 495 to 515 (VLKGLVALGGIYLLFIIEHCI). Phosphothreonine occurs at positions 536 and 553. Serine 591 is subject to Phosphoserine. Helical transmembrane passes span 687-707 (AIGA…IAVF), 732-752 (IVYN…GTAV), 759-779 (ITLW…LVDM), and 801-821 (FILQ…IALY).

It belongs to the ZIP transporter (TC 2.A.5) family. Interacts with SLC39A6; which triggers cells to undergo EMT and mitosis. Found in a complex with SLC39A6, SLC39A10 and with the 'Ser-727' phosphorylated form of STAT3 throughout mitosis. Found in a complex with SLC39A6, SLC39A10 and with NCAM1; this complex controls NCAM1 phosphorylation and integration into focal adhesion complexes during epithelial-tomesenchymal transition. Found in a complex with SLC39A6, SLC39A10 and with GSK3B that controls NCAM1 phosphorylation. Undergoes N-terminal ectodomain shedding.

Its subcellular location is the cell membrane. The protein resides in the apical cell membrane. The enzyme catalyses Zn(2+)(in) = Zn(2+)(out). Functionally, zinc-influx transporter. When associated with SLC39A6, the heterodimer formed by SLC39A10 and SLC39A6 mediates cellular zinc uptake to trigger cells to undergo epithelial-to-mesenchymal transition (EMT). SLC39A10-SLC39A6 heterodimers play also an essentiel role in initiating mitosis by importing zinc into cells to initiate a pathway resulting in the onset of mitosis. Plays an important for both mature B-cell maintenance and humoral immune responses. When associated with SLC39A10, the heterodimer controls NCAM1 phosphorylation and integration into focal adhesion complexes during EMT. The chain is Zinc transporter ZIP10 from Homo sapiens (Human).